Reading from the N-terminus, the 103-residue chain is Small ribosomal subunit protein uS10 (103 aa).

It belongs to the universal ribosomal protein uS10 family. In terms of assembly, part of the 30S ribosomal subunit.

Functionally, involved in the binding of tRNA to the ribosomes. The chain is Small ribosomal subunit protein uS10 from Bordetella parapertussis (strain 12822 / ATCC BAA-587 / NCTC 13253).